A 155-amino-acid polypeptide reads, in one-letter code: Ribonuclease H (155 aa).

Residues Met1 to Met142 enclose the RNase H type-1 domain. 4 residues coordinate Mg(2+): Asp10, Glu48, Asp70, and Asp134.

Belongs to the RNase H family. In terms of assembly, monomer. The cofactor is Mg(2+).

It is found in the cytoplasm. It carries out the reaction Endonucleolytic cleavage to 5'-phosphomonoester.. In terms of biological role, endonuclease that specifically degrades the RNA of RNA-DNA hybrids. The protein is Ribonuclease H of Enterobacter sp. (strain 638).